We begin with the raw amino-acid sequence, 179 residues long: Adenine phosphoribosyltransferase (179 aa).

This sequence belongs to the purine/pyrimidine phosphoribosyltransferase family. As to quaternary structure, homodimer.

The protein resides in the cytoplasm. The catalysed reaction is AMP + diphosphate = 5-phospho-alpha-D-ribose 1-diphosphate + adenine. The protein operates within purine metabolism; AMP biosynthesis via salvage pathway; AMP from adenine: step 1/1. In terms of biological role, catalyzes a salvage reaction resulting in the formation of AMP, that is energically less costly than de novo synthesis. This is Adenine phosphoribosyltransferase from Haemophilus ducreyi (strain 35000HP / ATCC 700724).